The primary structure comprises 644 residues: Kininogen-1 (644 aa).

An N-terminal signal peptide occupies residues 1–18 (MKLITILFLCSRLLLSLT). Gln-19 is modified (pyrrolidone carboxylic acid; in mature form). Residues 28–132 (CNDKDLFKAV…TQTCQITPAE (105 aa)) form the Cystatin kininogen-type 1 domain. 9 cysteine pairs are disulfide-bonded: Cys-28–Cys-614, Cys-83–Cys-94, Cys-107–Cys-126, Cys-142–Cys-145, Cys-206–Cys-218, Cys-229–Cys-248, Cys-264–Cys-267, Cys-328–Cys-340, and Cys-351–Cys-370. An N-linked (GlcNAc...) (complex) asparagine glycan is attached at Asn-48. Residues 120–153 (SVATQTCQITPAEGPVVTAQYDCLGCVHPISTQS) are O-glycosylated at one site only. The 104-residue stretch at 151–254 (TQSPDLEPIL…SQNCDIYPGK (104 aa)) folds into the Cystatin kininogen-type 2 domain. Residue Asn-169 is glycosylated (N-linked (GlcNAc...) asparagine). Residue Asn-205 is glycosylated (N-linked (GlcNAc...) (complex) asparagine). In terms of domain architecture, Cystatin kininogen-type 3 spans 273 to 376 (TNSPELEETL…TVNCQPLGMI (104 aa)). A glycan (N-linked (GlcNAc...) (complex) asparagine) is linked at Asn-294. Ser-332 carries the post-translational modification Phosphoserine; by FAM20C. Position 383 is a 4-hydroxyproline; partial (Pro-383). The tract at residues 387-555 (PFRSSRIGEI…TPIPSLAKPG (169 aa)) is disordered. Thr-401 is a glycosylation site (O-linked (GalNAc...) threonine). Positions 418-434 (DSGKEQGHTRRHDWGHE) are enriched in basic and acidic residues. Repeats lie at residues 420–449 (GKEQ…KHER), 450–479 (DQGH…KFKL), and 480–510 (DDDL…KNKG). The segment covering 435 to 446 (KQRKHNLGHGHK) has biased composition (basic residues). Positions 477 to 493 (FKLDDDLEHQGGHVLDH) are enriched in basic and acidic residues. Residues 494–518 (GHKHKHGHGHGKHKNKGKKNGKHNG) show a composition bias toward basic residues. The segment covering 524–539 (LASSSEDSTTPSAQTQ) has biased composition (polar residues). 5 O-linked (GalNAc...) threonine glycosylation sites follow: Thr-533, Thr-542, Thr-546, Thr-557, and Thr-571. Ser-577 carries an O-linked (GalNAc...) serine glycan. Thr-628 carries an O-linked (GalNAc...) threonine glycan.

Interacts (high molecular weight kininogen) (via amino acids 402-532) with triafestin-1 and triafestin-2, anticoagulant proteins from Triatoma infestans. Interacts (high molecular weight kininogen) (via amino acids 402-532) with short form salivary protein D7R1, an anticoagulant protein from Anopheles stephensi. Interacts (high molecular weight kininogen) (via amino acids 421-466 and 459-513) with haemaphysalin, an anticoagulant protein from Haemaphysalis longicornis. In terms of processing, bradykinin is inactivated by ACE, which removes the dipeptide Arg-Phe from its C-terminus. Bradykinin is released from kininogen by plasma kallikrein. Post-translationally, hydroxylation of Pro-383 occurs prior to the release of bradykinin. In terms of processing, phosphorylated by FAM20C in the extracellular medium. N- and O-glycosylated. O-glycosylated with core 1 or possibly core 8 glycans. Post-translationally, (Microbial infection) Bradykinin is generated upon proteolytic cleavage by S.pyogenes SpeB to produce hypotension during septic shock. As to expression, secreted in plasma. T-kinin is detected in malignant ovarian, colon and breast carcinomas, but not in benign tumors.

It is found in the secreted. Its subcellular location is the extracellular space. Kininogens are inhibitors of thiol proteases. HMW-kininogen plays an important role in blood coagulation by helping to position optimally prekallikrein and factor XI next to factor XII; HMW-kininogen inhibits the thrombin- and plasmin-induced aggregation of thrombocytes. LMW-kininogen inhibits the aggregation of thrombocytes. LMW-kininogen is in contrast to HMW-kininogen not involved in blood clotting. Its function is as follows. The active peptide bradykinin is a potent vasodilatator that is released from HMW-kininogen shows a variety of physiological effects: (A) influence in smooth muscle contraction, (B) induction of hypotension, (C) natriuresis and diuresis, (D) decrease in blood glucose level, (E) it is a mediator of inflammation and causes (E1) increase in vascular permeability, (E2) stimulation of nociceptors (4E3) release of other mediators of inflammation (e.g. prostaglandins), (F) it has a cardioprotective effect (directly via bradykinin action, indirectly via endothelium-derived relaxing factor action). This is Kininogen-1 (KNG1) from Homo sapiens (Human).